Reading from the N-terminus, the 699-residue chain is D-(-)-3-hydroxybutyrate oligomer hydrolase (699 aa).

Positions 1–33 (MTAIRGGSRRAPGLALALLGGVLLGACHGDENA) are cleaved as a signal peptide. Serine 311 serves as the catalytic Charge relay system.

It belongs to the D-(-)-3-hydroxybutyrate oligomer hydrolase family.

The protein localises to the secreted. It catalyses the reaction (3R)-hydroxybutanoate dimer + H2O = 2 (R)-3-hydroxybutanoate + H(+). The protein operates within lipid metabolism; butanoate metabolism. Participates in the degradation of poly-3-hydroxybutyrate (PHB). It works downstream of poly(3-hydroxybutyrate) depolymerase, hydrolyzing D(-)-3-hydroxybutyrate oligomers of various length (3HB-oligomers) into 3HB-monomers. The chain is D-(-)-3-hydroxybutyrate oligomer hydrolase from Burkholderia mallei (strain SAVP1).